The sequence spans 513 residues: Cytochrome P450 monooxygenase sthF (513 aa).

A run of 2 helical transmembrane segments spans residues 13–33 (FPSLHRIIISTFALIAAYIFI) and 212–232 (MLHPWLQLVFANIYITHIILL). A heme-binding site is contributed by Cys452.

It belongs to the cytochrome P450 family. Heme is required as a cofactor.

It is found in the membrane. It carries out the reaction dehydroprobetaenone I + NADPH + O2 + H(+) = epoxybetaenone + NADP(+) + H2O. The enzyme catalyses dehydroprobetaenone I + 3 NADPH + 3 O2 + 3 H(+) = betaenone C + 3 NADP(+) + 3 H2O. It catalyses the reaction probetaenone I + 3 NADPH + 3 O2 + 3 H(+) = betaenone B + 3 NADP(+) + 3 H2O. The protein operates within mycotoxin biosynthesis. In terms of biological role, cytochrome P450 monooxygenase; part of the gene cluster that mediates the biosynthesis of the phytotoxin stemphyloxin II. The first step of the pathway is the synthesis of dehydroprobetaenone I by the polyketide synthase sthA and the enoyl reductase sthE via condensation of one acetyl-CoA starter unit with 7 malonyl-CoA units and 5 methylations. The C-terminal reductase (R) domain of sthA catalyzes the reductive release of the polyketide chain. Because sthA lacks a designated enoylreductase (ER) domain, the required activity is provided the enoyl reductase sthE. The short-chain dehydrogenase/reductase sthC then catalyzes reduction of dehydroprobetaenone I to probetaenone I. The cytochrome P450 monooxygenase sthF catalyzes successive epoxidation, oxidation (resulting from epoxide opening) and hydroxylation to install a tertiary alcohol in the decaline ring to yield betaenone C from dehydroprobetaenone I and betaenone B from probetaenone I. The FAD-linked oxidoreductase sthB is responsible for the conversion of betaenone C to betaenone A via an intramolecular aldol reaction between C-1 and C-17 to form the bridged tricyclic system in betaenone A. Finally, the cytochrome P450 monooxygenase sthD catalyzes the hydroxylation of C-15 to afford the final metabolite stemphyloxin II. This is Cytochrome P450 monooxygenase sthF from Phaeosphaeria nodorum (strain SN15 / ATCC MYA-4574 / FGSC 10173) (Glume blotch fungus).